Reading from the N-terminus, the 422-residue chain is Probable protein phosphatase 2C 69 (422 aa).

Residues T45–I294 enclose the PPM-type phosphatase domain. D70, G71, D246, and D285 together coordinate Mn(2+).

Belongs to the PP2C family. The cofactor is Mg(2+). Requires Mn(2+) as cofactor.

It carries out the reaction O-phospho-L-seryl-[protein] + H2O = L-seryl-[protein] + phosphate. The catalysed reaction is O-phospho-L-threonyl-[protein] + H2O = L-threonyl-[protein] + phosphate. The polypeptide is Probable protein phosphatase 2C 69 (Oryza sativa subsp. japonica (Rice)).